The primary structure comprises 445 residues: Chromosome partition protein MukF (445 aa).

Residues 213–241 (LSETSATLRELQDTLQAAGDELQTQILDI) form a leucine-zipper region.

The protein belongs to the MukF family. Interacts, and probably forms a ternary complex, with MukE and MukB via its C-terminal region. The complex formation is stimulated by calcium or magnesium. It is required for an interaction between MukE and MukB.

Its subcellular location is the cytoplasm. It localises to the nucleoid. Its function is as follows. Involved in chromosome condensation, segregation and cell cycle progression. May participate in facilitating chromosome segregation by condensation DNA from both sides of a centrally located replisome during cell division. Not required for mini-F plasmid partitioning. Probably acts via its interaction with MukB and MukE. Overexpression results in anucleate cells. It has a calcium binding activity. In Vibrio cholerae serotype O1 (strain ATCC 39541 / Classical Ogawa 395 / O395), this protein is Chromosome partition protein MukF.